A 292-amino-acid polypeptide reads, in one-letter code: Ribosomal RNA small subunit methyltransferase A (292 aa).

Positions 29, 31, 56, 77, 102, and 127 each coordinate S-adenosyl-L-methionine.

The protein belongs to the class I-like SAM-binding methyltransferase superfamily. rRNA adenine N(6)-methyltransferase family. RsmA subfamily.

Its subcellular location is the cytoplasm. The catalysed reaction is adenosine(1518)/adenosine(1519) in 16S rRNA + 4 S-adenosyl-L-methionine = N(6)-dimethyladenosine(1518)/N(6)-dimethyladenosine(1519) in 16S rRNA + 4 S-adenosyl-L-homocysteine + 4 H(+). In terms of biological role, specifically dimethylates two adjacent adenosines (A1518 and A1519) in the loop of a conserved hairpin near the 3'-end of 16S rRNA in the 30S particle. May play a critical role in biogenesis of 30S subunits. This is Ribosomal RNA small subunit methyltransferase A from Bacillus licheniformis (strain ATCC 14580 / DSM 13 / JCM 2505 / CCUG 7422 / NBRC 12200 / NCIMB 9375 / NCTC 10341 / NRRL NRS-1264 / Gibson 46).